Consider the following 89-residue polypeptide: Small ribosomal subunit protein uS15 (89 aa).

The protein belongs to the universal ribosomal protein uS15 family. In terms of assembly, part of the 30S ribosomal subunit. Forms a bridge to the 50S subunit in the 70S ribosome, contacting the 23S rRNA.

Functionally, one of the primary rRNA binding proteins, it binds directly to 16S rRNA where it helps nucleate assembly of the platform of the 30S subunit by binding and bridging several RNA helices of the 16S rRNA. Its function is as follows. Forms an intersubunit bridge (bridge B4) with the 23S rRNA of the 50S subunit in the ribosome. This Shewanella halifaxensis (strain HAW-EB4) protein is Small ribosomal subunit protein uS15.